We begin with the raw amino-acid sequence, 299 residues long: Ribosomal protein L11 methyltransferase (299 aa).

S-adenosyl-L-methionine is bound by residues threonine 149, glycine 170, aspartate 192, and asparagine 234.

The protein belongs to the methyltransferase superfamily. PrmA family.

Its subcellular location is the cytoplasm. It carries out the reaction L-lysyl-[protein] + 3 S-adenosyl-L-methionine = N(6),N(6),N(6)-trimethyl-L-lysyl-[protein] + 3 S-adenosyl-L-homocysteine + 3 H(+). Functionally, methylates ribosomal protein L11. The polypeptide is Ribosomal protein L11 methyltransferase (Chromohalobacter salexigens (strain ATCC BAA-138 / DSM 3043 / CIP 106854 / NCIMB 13768 / 1H11)).